We begin with the raw amino-acid sequence, 448 residues long: Hyaluronidase conohyal-Cn1 (448 aa).

The signal sequence occupies residues 1-18 (MRAVVVVTGLVVVVVATA). The propeptide occupies 19 to 33 (LSLPNHDVKSATSSR). A disordered region spans residues 26-55 (VKSATSSRSSSDYQGSSGDDCDEGLPPPDQ). A compositionally biased stretch (low complexity) spans 31–43 (SSRSSSDYQGSSG). Cys67 and Cys344 are joined by a disulfide. A glycan (N-linked (GlcNAc...) asparagine) is linked at Asn141. Catalysis depends on Glu151, which acts as the Proton donor. N-linked (GlcNAc...) asparagine glycans are attached at residues Asn169 and Asn361. 3 cysteine pairs are disulfide-bonded: Cys369–Cys380, Cys374–Cys413, and Cys415–Cys424. The EGF-like domain occupies 413–424 (CRCYSAWEGACC).

This sequence belongs to the glycosyl hydrolase 56 family. In terms of tissue distribution, expressed by the venom duct.

It localises to the secreted. It carries out the reaction Random hydrolysis of (1-&gt;4)-linkages between N-acetyl-beta-D-glucosamine and D-glucuronate residues in hyaluronate.. Hyaluronidase catalyzes the hydrolysis of hyaluronic acid (HA), an anionic, nonsulfated glycosaminoglycan distributed widely throughout connective, epithelial, and neural tissues. In venom, they are known to enhance diffusion of the venom by degrading the extracellular matrix. The sequence is that of Hyaluronidase conohyal-Cn1 from Conus consors (Singed cone).